The following is a 474-amino-acid chain: Phosphatidylserine synthase 2 (474 aa).

Over 1 to 62 (MLRSDVRRVA…DDGTNTFFWR (62 aa)) the chain is Lumenal. The chain crosses the membrane as a helical span at residues 63–83 (AHTLTVLFILTCSLGYVTLLE). At 84 to 96 (ETPQDTAYNAKRG) the chain is on the cytoplasmic side. The chain crosses the membrane as a helical span at residues 97 to 117 (IIASILVFLCFGVTQAKDGPF). Residues 118–126 (SRPHPAYWR) are Lumenal-facing. A helical transmembrane segment spans residues 127 to 147 (FWLCVSVVYELFLIFILFQTV). Residues 148–313 (HDGRQFMKFI…EWKPASSLRR (166 aa)) are Cytoplasmic-facing. A helical membrane pass occupies residues 314 to 334 (WLAVCGIIFVFLLAELNTFYL). A topological domain (lumenal) is located at residue Lys335. Residues 336-356 (FVLWMPPEHYLVLLRLVFFVN) form a helical membrane-spanning segment. Over 357-376 (VGGVAMREIYDFMDDLKFHK) the chain is Cytoplasmic. A helical transmembrane segment spans residues 377-397 (KLGQQAWMVAAITVTEFLIVV). The Lumenal portion of the chain corresponds to 398–403 (KYDPYT). A helical transmembrane segment spans residues 404-424 (ITLPLPFYVTQCWILGIVLVL). Over 425–474 (TWTVWRFFIRDITLRYKEIRQQKQHRNEEEKSHRNGDVNSEKDTNKHKKH) the chain is Cytoplasmic. A compositionally biased stretch (basic and acidic residues) spans 448 to 468 (QHRNEEEKSHRNGDVNSEKDT). A disordered region spans residues 448-474 (QHRNEEEKSHRNGDVNSEKDTNKHKKH).

Belongs to the phosphatidyl serine synthase family.

It localises to the endoplasmic reticulum membrane. The enzyme catalyses a 1,2-diacyl-sn-glycero-3-phosphoethanolamine + L-serine = a 1,2-diacyl-sn-glycero-3-phospho-L-serine + ethanolamine. It catalyses the reaction 1-hexadecanoyl-2-(9Z-octadecenoyl)-sn-glycero-3-phosphoethanolamine + L-serine = 1-hexadecanoyl-2-(9Z-octadecenoyl)-sn-glycero-3-phospho-L-serine + ethanolamine. It carries out the reaction 1-hexadecanoyl-2-(4Z,7Z,10Z,13Z,16Z,19Z-docosahexaenoyl)-sn-glycero-3-phosphoethanolamine + L-serine = 1-hexadecanoyl-2-(4Z,7Z,10Z,13Z,16Z,19Z-docosahexaenoyl)-sn-glycero-3-phosphoserine + ethanolamine. The catalysed reaction is 1-octadecanoyl-2-(5Z,8Z,11Z,14Z)-eicosatetraenoyl-sn-glycero-3-phosphoethanolamine + L-serine = 1-octadecanoyl-2-(5Z,8Z,11Z,14Z)-eicosatetraenoyl-sn-glycero-3-phosphoserine + ethanolamine. The enzyme catalyses 1-octadecanoyl-2-(4Z,7Z,10Z,13Z,16Z,19Z-docosahexaenoyl)-sn-glycero-3-phosphoethanolamine + L-serine = 1-octadecanoyl-2-(4Z,7Z,10Z,13Z,16Z,19Z-docosahexaenoyl)-sn-glycero-3-phosphoserine + ethanolamine. It catalyses the reaction 1-(1Z-octadecenyl)-2-(4Z,7Z,10Z,13Z,16Z,19Z-docosahexaenoyl)-sn-glycero-3-phosphoethanolamine + L-serine = 1-(1Z-octadecenyl)-2-(4Z,7Z,10Z,13Z,16Z,19Z-docosahexaenoyl)-sn-glycero-3-phospho-L-serine + ethanolamine. It carries out the reaction 1-octadecanoyl-2-(9Z-octadecenoyl)-sn-glycero-3-phosphoethanolamine + L-serine = 1-octadecanoyl-2-(9Z-octadecenoyl)-sn-glycero-3-phospho-L-serine + ethanolamine. The catalysed reaction is 1-(1Z-octadecenyl)-2-(9Z-octadecenoyl)-sn-glycero-3-phosphoethanolamine + L-serine = 1-(1Z-octadecenyl)-2-(9Z-octadecenoyl)-sn-glycero-3-phospho-L-serine + ethanolamine. The enzyme catalyses 1-(1Z-octadecenyl)-2-(5Z,8Z,11Z,14Z- eicosatetraenoyl)-sn-glycero-3-phosphoethanolamine + L-serine = 1-(1Z-octadecenyl)-2-(5Z,8Z,11Z,14Z-eicosatetraenoyl)-sn-glycero-3-phospho-L-serine + ethanolamine. The protein operates within phospholipid metabolism; phosphatidylserine biosynthesis. Its function is as follows. Catalyzes a base-exchange reaction in which the polar head group of phosphatidylethanolamine (PE) or phosphatidylcholine (PC) is replaced by L-serine. Catalyzes the conversion of phosphatatidylethanolamine and does not act on phosphatidylcholine. Can utilize both phosphatidylethanolamine (PE) plasmalogen and diacyl PE as substrate and the latter is six times better utilized, indicating the importance of an ester linkage at the sn-1 position. Although it shows no sn-1 fatty acyl preference, exhibits significant preference towards docosahexaenoic acid (22:6n-3) compared with 18:1 or 20:4 at the sn-2 position. The chain is Phosphatidylserine synthase 2 (ptdss2) from Xenopus tropicalis (Western clawed frog).